The chain runs to 317 residues: Glutamyl-tRNA reductase-binding protein, chloroplastic (317 aa).

Residues 1–42 (MQLQTQSFALNLLPSPNFAKPIERREFISLKRDPSRPISLRC) constitute a chloroplast transit peptide.

Interacts with HEMA1 and forms a heterotetramer of two GLUTRBP and two HEMA1 subunits.

Its subcellular location is the plastid. It is found in the chloroplast stroma. In terms of biological role, involved in the regulation of glutamyl-tRNA reductase (GluTR) which is important for the synthesis and distribution of 5-aminolevulinate, a precursor in heme and chlorophyll biosynthesis. Stimulates GluTR activity and regulates glutamate-1-semialdehyde release. May play a role in heme metabolism. Necessary for efficient photosynthetic electron transport in chloroplasts. The chain is Glutamyl-tRNA reductase-binding protein, chloroplastic from Arabidopsis thaliana (Mouse-ear cress).